We begin with the raw amino-acid sequence, 382 residues long: DNA replication and repair protein RecF (382 aa).

30-37 (GPNGHGKS) provides a ligand contact to ATP.

Belongs to the RecF family.

The protein resides in the cytoplasm. The RecF protein is involved in DNA metabolism; it is required for DNA replication and normal SOS inducibility. RecF binds preferentially to single-stranded, linear DNA. It also seems to bind ATP. The chain is DNA replication and repair protein RecF from Magnetococcus marinus (strain ATCC BAA-1437 / JCM 17883 / MC-1).